Here is a 117-residue protein sequence, read N- to C-terminus: Appetite-regulating hormone (117 aa).

A signal peptide spans 1-23; the sequence is MPSLGTMCSLLLFSVLWVDLAMA. Ser26 carries the O-decanoyl serine; alternate lipid modification. Ser26 carries the O-hexanoyl serine; alternate lipid modification. Ser26 carries the O-octanoyl serine; alternate lipid modification. The interval 30-68 is disordered; it reads PEHQKLQQRKESKKPPAKLQPRALEGSLGPEDTSQVEEA. Residues 31–43 are compositionally biased toward basic and acidic residues; that stretch reads EHQKLQQRKESKK. Residues 52–75 constitute a propeptide, removed in mature form; sequence ALEGSLGPEDTSQVEEAEDELEIR. Leu98 carries the leucine amide modification. The propeptide at 99 to 117 is removed in mature form; sequence GKFLQEVLWEDTNEALADE.

It belongs to the motilin family. Post-translationally, O-octanoylated by GOAT/MBOAT4. O-octanoylation is essential for ghrelin activity. In terms of processing, amidation of Leu-98 is essential for obestatin activity.

Its subcellular location is the secreted. Functionally, ghrelin is the ligand for growth hormone secretagogue receptor type 1 (GHSR). Induces the release of growth hormone from the pituitary. Has an appetite-stimulating effect, induces adiposity and stimulates gastric acid secretion. Involved in growth regulation. In terms of biological role, obestatin may be the ligand for GPR39. May have an appetite-reducing effect resulting in decreased food intake. May reduce gastric emptying activity and jejunal motility. The polypeptide is Appetite-regulating hormone (GHRL) (Canis lupus familiaris (Dog)).